Here is a 350-residue protein sequence, read N- to C-terminus: Twinfilin-1 (350 aa).

S2 is subject to N-acetylserine. The ADF-H 1 domain occupies 2–139; it reads SHQTGIQASE…SLHGYKKYLL (138 aa). A phosphoserine mark is found at S143 and S277. The ADF-H 2 domain occupies 175–313; it reads LQGVAFPISR…TADFLYEEVH (139 aa). Position 309 is a phosphotyrosine (Y309). The interval 316–350 is disordered; that stretch reads QHAHKQSFAKPKGPAGKRGIRRLIRGPAETEATTD. Residue T349 is modified to Phosphothreonine.

This sequence belongs to the actin-binding proteins ADF family. Twinfilin subfamily. Interacts with G-actin; ADP-actin form and capping protein (CP). May also be able to interact with TWF2 and phosphoinositides, PI(4,5)P2. When bound to PI(4,5)P2, it is down-regulated. Interacts with ACTG1. Phosphorylated on serine and threonine residues. Expressed at high levels in the colon, testis, ovary, prostate and lung. Expressed at lower levels in the brain, bladder and heart. Not detected in liver.

It is found in the cytoplasm. It localises to the cytoskeleton. Actin-binding protein involved in motile and morphological processes. Inhibits actin polymerization, likely by sequestering G-actin. By capping the barbed ends of filaments, it also regulates motility. Seems to play an important role in clathrin-mediated endocytosis and distribution of endocytic organelles. The polypeptide is Twinfilin-1 (TWF1) (Homo sapiens (Human)).